Consider the following 617-residue polypeptide: Hemagglutinin glycoprotein (617 aa).

Residues 1 to 37 (MSPQRDRINAFYKDNPHPKGSRIVINREHLMIDRPYV) lie on the Intravirion side of the membrane. The stalk stretch occupies residues 1–154 (MSPQRDRINA…RIKLDYDQYC (154 aa)). Residues 38–58 (LLAVLFVMFLSLIGLLAIAGI) form a helical; Signal-anchor for type II membrane protein membrane-spanning segment. Residues 59–617 (RLHRAAIYTA…VTREDGTNRR (559 aa)) are Virion surface-facing. N-linked (GlcNAc...) asparagine; by host glycosylation is found at Asn-168, Asn-187, Asn-200, Asn-215, and Asn-238. 5 disulfide bridges follow: Cys-188-Cys-606, Cys-287-Cys-300, Cys-381-Cys-494, Cys-386-Cys-394, and Cys-570-Cys-579. Residues 458–543 (PMKNLALGVI…VEHAVVYYVY (86 aa)) are interaction with host NECTIN4 receptor.

Belongs to the paramyxoviruses hemagglutinin-neuraminidase family. Non-sialidase subfamily. In terms of assembly, homodimer; disulfide-linked. Further forms homotetramer (dimer of dimers). Interacts (via C-terminus) with human NECTIN4 (via N-terminus); this interaction allows attachment to the respiratory epithelium and viral entry. Interacts (via C-terminus) with human SLAMF1/CD150 (via N-terminus); this interaction allows attachment and viral entry into the CD150-expressing immune cells. Interacts with human CD46 antigen (via N-terminus); this interaction allows attachment and viral entry of vaccine and laboratory-adapted strains.

It is found in the virion membrane. The protein localises to the host cell membrane. Attaches the virus to the human SLAMF1/CD150 receptor for entry into host dendritic cells, macrophages, activated memory T cells and naive or memory B cells, thereby explaining the long immunosuppression that follows infection. In the respiratory airways, binds to the NECTIN4 receptor for entry into the host cell. Binding of H protein to the receptor induces a conformational change that allows the F protein to trigger virion/cell membranes fusion. The vaccine and laboratory-adapted strains use host CD46 as an alternate receptor. The high degree of interaction between H and CD46 results in down-regulation of the latter from the surface of infected cells, rendering them more sensitive to c3b-mediated complement lysis. This Measles virus (strain Edmonston) (MeV) protein is Hemagglutinin glycoprotein (H).